We begin with the raw amino-acid sequence, 637 residues long: Poly(U)-binding-splicing factor hfp (637 aa).

2 stretches are compositionally biased toward basic and acidic residues: residues 1-20 and 28-37; these read MGSN…REIS and TRSDSGKSTD. The tract at residues 1-41 is disordered; it reads MGSNDRASRSPRSDDQREISDMPATKRTRSDSGKSTDSKIP. Phosphoserine is present on residues S13 and S30. 2 RRM domains span residues 130 to 208 and 227 to 305; these read CRVY…RPSN and NRIY…RSIT. In terms of domain architecture, RRM 3; atypical spans 537–627; it reads RVIILRNMVG…RRVVAELYDQ (91 aa).

It belongs to the RRM half pint family. Interacts with enc. However, given the cytoplasmic localization of enc, the relevance of such interaction is unclear. In terms of tissue distribution, expressed in all germline cells and within the follicle cell.

The protein resides in the nucleus. Its function is as follows. Splicing factor that regulates oogenesis and controls both mitosis and mRNA localization in the germline by regulating mRNA splicing of a subset of genes within the ovary. Probably acts by regulating the alternative splice site selection of the otu transcript. Also regulates the alternative splicing of eIF4E1 and grk, while it is not involved in the splicing of par-1, sqd or psq. Involved in the alternative splicing of the bicistronic pre-mRNA encoding Kdm3 and CG8176; required for the efficient production of mRNA encoding Kdm3 and Kdm3-mediated regulation of rhino-dependent piRNA production. The sequence is that of Poly(U)-binding-splicing factor hfp from Drosophila melanogaster (Fruit fly).